The primary structure comprises 429 residues: Ribosomal RNA small subunit methyltransferase B (429 aa).

S-adenosyl-L-methionine contacts are provided by residues 254–260 (CAAPGGK), aspartate 277, aspartate 303, and aspartate 322. The active-site Nucleophile is cysteine 375.

Belongs to the class I-like SAM-binding methyltransferase superfamily. RsmB/NOP family.

The protein resides in the cytoplasm. It carries out the reaction cytidine(967) in 16S rRNA + S-adenosyl-L-methionine = 5-methylcytidine(967) in 16S rRNA + S-adenosyl-L-homocysteine + H(+). Its function is as follows. Specifically methylates the cytosine at position 967 (m5C967) of 16S rRNA. This is Ribosomal RNA small subunit methyltransferase B from Shigella boydii serotype 4 (strain Sb227).